We begin with the raw amino-acid sequence, 259 residues long: Ribosomal RNA small subunit methyltransferase A (259 aa).

S-adenosyl-L-methionine is bound by residues N13, L15, G40, E61, D85, and N103.

Belongs to the class I-like SAM-binding methyltransferase superfamily. rRNA adenine N(6)-methyltransferase family. RsmA subfamily.

The protein resides in the cytoplasm. The enzyme catalyses adenosine(1518)/adenosine(1519) in 16S rRNA + 4 S-adenosyl-L-methionine = N(6)-dimethyladenosine(1518)/N(6)-dimethyladenosine(1519) in 16S rRNA + 4 S-adenosyl-L-homocysteine + 4 H(+). Functionally, specifically dimethylates two adjacent adenosines (A1518 and A1519) in the loop of a conserved hairpin near the 3'-end of 16S rRNA in the 30S particle. May play a critical role in biogenesis of 30S subunits. This chain is Ribosomal RNA small subunit methyltransferase A, found in Neisseria meningitidis serogroup A / serotype 4A (strain DSM 15465 / Z2491).